Consider the following 327-residue polypeptide: MQQLTEIVEQALEVIEKASDLKTLDDIRVDYLGKKGKITDMMKMMGSLSAEEKPAFGAAVNQAKQAVQQQLTERIDGLKASELEAKLIAENIDVTLPGRTLDIGGLHPVTRTIERIETFFGELGFVVKQGPEIEDDFHNFDALNISEHHPARADHDTFYFNPKVMLRTQTSGVQIRTMEHEKPPLRIISPGRVYRNDYDQTHTPMFHQVEGLMVAENVNFAELKGILHDFLRNFFEEDLEVRFRPSYFPFTEPSAEVDVMGKNGKWLEVLGCGMVHPNVLRSVGIDPEKYSGFAFGMGVERLTMLRYGVNDLRAFFENDLRFLKQFK.

E252 provides a ligand contact to Mg(2+).

It belongs to the class-II aminoacyl-tRNA synthetase family. Phe-tRNA synthetase alpha subunit type 1 subfamily. In terms of assembly, tetramer of two alpha and two beta subunits. The cofactor is Mg(2+).

Its subcellular location is the cytoplasm. It catalyses the reaction tRNA(Phe) + L-phenylalanine + ATP = L-phenylalanyl-tRNA(Phe) + AMP + diphosphate + H(+). The polypeptide is Phenylalanine--tRNA ligase alpha subunit (Shewanella frigidimarina (strain NCIMB 400)).